We begin with the raw amino-acid sequence, 215 residues long: MPVEVKICGITDEDAMDVAIEEGADYVGLVFFPPSPRNVTPDRAAELVEFAPGDVTKVGLFVDPDDATLDTVLTRVRLDLLQLHGHETPERVEAIRLEYGLPVMKVLSVSDAADLDAAEPYLAVADRLLFDAKPPKGAVLPGGNAVSFDWSILTGRKWGLPWMLAGGLTPANVAEAVRISGAAAVDVSSGVESAPGIKDSDKIRAFIKAARGGRP.

It belongs to the TrpF family.

The enzyme catalyses N-(5-phospho-beta-D-ribosyl)anthranilate = 1-(2-carboxyphenylamino)-1-deoxy-D-ribulose 5-phosphate. Its pathway is amino-acid biosynthesis; L-tryptophan biosynthesis; L-tryptophan from chorismate: step 3/5. The polypeptide is N-(5'-phosphoribosyl)anthranilate isomerase (Paramagnetospirillum magneticum (strain ATCC 700264 / AMB-1) (Magnetospirillum magneticum)).